The primary structure comprises 1244 residues: Superkiller complex protein 2 (1244 aa).

Positions 218–249 (LDLSGGDEDEGEAAGGPRGDNASPSPSGTPLV) are disordered. Residues Ser-242 and Ser-253 each carry the phosphoserine modification. The Helicase ATP-binding domain occupies 316-472 (ILHLEQHDSV…WIGRLKRRQI (157 aa)). 329–336 (AHTSAGKT) is a binding site for ATP. The DEVH box signature appears at 420 to 423 (DEVH). Residues 582-752 (GLTSLDLTTS…LTYTMILNLL (171 aa)) enclose the Helicase C-terminal domain.

It belongs to the helicase family. SKI2 subfamily. In terms of assembly, component of the SKI complex which consists of SKIC2, SKIC3 and SKIC8. Interacts with HBS1L isoform 2.

It is found in the nucleus. Its subcellular location is the cytoplasm. It catalyses the reaction ATP + H2O = ADP + phosphate + H(+). Helicase component of the SKI complex, a multiprotein complex that assists the RNA-degrading exosome during the mRNA decay and quality-control pathways. The SKI complex catalyzes mRNA extraction from 80S ribosomal complexes in the 3'-5' direction and channels mRNA to the cytosolic exosome for degradation. SKI-mediated extraction of mRNA from stalled ribosomes allow binding of the Pelota-HBS1L complex and subsequent ribosome disassembly by ABCE1 for ribosome recycling. In the nucleus, the SKI complex associates with transcriptionally active genes in a manner dependent on PAF1 complex (PAF1C). The sequence is that of Superkiller complex protein 2 from Mus musculus (Mouse).